A 172-amino-acid chain; its full sequence is HAD-like hydrolase superfamily protein P8B7.31 (172 aa).

Aspartate 14 acts as the Nucleophile in catalysis. Positions 14, 16, and 137 each coordinate Mg(2+). The Proton donor role is filled by aspartate 16.

This sequence belongs to the HAD-like hydrolase superfamily.

It is found in the cytoplasm. Its subcellular location is the nucleus. This is HAD-like hydrolase superfamily protein P8B7.31 from Schizosaccharomyces pombe (strain 972 / ATCC 24843) (Fission yeast).